Reading from the N-terminus, the 548-residue chain is Glucose-6-phosphate isomerase 1 (548 aa).

Catalysis depends on Glu-353, which acts as the Proton donor. Active-site residues include His-384 and Lys-495.

The protein belongs to the GPI family.

The protein localises to the cytoplasm. It catalyses the reaction alpha-D-glucose 6-phosphate = beta-D-fructose 6-phosphate. The protein operates within carbohydrate biosynthesis; gluconeogenesis. Its pathway is carbohydrate degradation; glycolysis; D-glyceraldehyde 3-phosphate and glycerone phosphate from D-glucose: step 2/4. Catalyzes the reversible isomerization of glucose-6-phosphate to fructose-6-phosphate. The chain is Glucose-6-phosphate isomerase 1 from Chromohalobacter salexigens (strain ATCC BAA-138 / DSM 3043 / CIP 106854 / NCIMB 13768 / 1H11).